A 502-amino-acid polypeptide reads, in one-letter code: Glutamate--tRNA ligase (502 aa).

Residues 12–22 carry the 'HIGH' region motif; that stretch reads PSPTGYLHVGG. A 'KMSKS' region motif is present at residues 259–263; that stretch reads KLSKR. ATP is bound at residue Lys-262.

It belongs to the class-I aminoacyl-tRNA synthetase family. Glutamate--tRNA ligase type 1 subfamily. In terms of assembly, monomer.

The protein localises to the cytoplasm. The catalysed reaction is tRNA(Glu) + L-glutamate + ATP = L-glutamyl-tRNA(Glu) + AMP + diphosphate. Its function is as follows. Catalyzes the attachment of glutamate to tRNA(Glu) in a two-step reaction: glutamate is first activated by ATP to form Glu-AMP and then transferred to the acceptor end of tRNA(Glu). This Chlorobium chlorochromatii (strain CaD3) protein is Glutamate--tRNA ligase.